A 201-amino-acid polypeptide reads, in one-letter code: MQSTQISSTTVILPSEVIQPPQQSAVPSEFKNTLPSRLNLFEGFDQSFSELTNPYQPVIPLMQRESLLGASSYYSSPSQNQRSYQNHRQHSNPDTINLRSQQQKRKPRVLFTQHQVNELEERFKKQRYVTATEREELAQCLGLTATQVKIWFQNRRYKCKRLAQDRTLQLSQIPFNPMFASAFPFGINSFGTAPSSSSSGS.

Residues 72 to 84 (SYYSSPSQNQRSY) are compositionally biased toward polar residues. Residues 72-94 (SYYSSPSQNQRSYQNHRQHSNPD) are disordered. The homeobox DNA-binding region spans 104-163 (KRKPRVLFTQHQVNELEERFKKQRYVTATEREELAQCLGLTATQVKIWFQNRRYKCKRLA).

This sequence belongs to the NK-2 homeobox family.

The protein localises to the nucleus. Its function is as follows. Probable transcription factor that regulates neuronal differention, including synapse assembly of the cholinergic motor neuron M4. Activates expression of growth factor, neuropeptide and transcription factor genes, such as TGF-beta dbl-1, FMRFamide-like flp-5 and transcription repressor zag-1, in the M4 neuron. Required for pharynx peristalsis. This chain is Homeobox protein ceh-28, found in Caenorhabditis elegans.